Consider the following 308-residue polypeptide: Ribonuclease H2 subunit B (308 aa).

Alanine 2 is subject to N-acetylalanine. Lysine 292 carries the N6-acetyllysine modification. Serine 293 bears the Phosphoserine mark.

This sequence belongs to the RNase H2 subunit B family. In terms of assembly, the RNase H2 complex is a heterotrimer composed of the catalytic subunit RNASEH2A and the non-catalytic subunits RNASEH2B and RNASEH2C.

The protein resides in the nucleus. Non catalytic subunit of RNase H2, an endonuclease that specifically degrades the RNA of RNA:DNA hybrids. Participates in DNA replication, possibly by mediating the removal of lagging-strand Okazaki fragment RNA primers during DNA replication. Mediates the excision of single ribonucleotides from DNA:RNA duplexes. The protein is Ribonuclease H2 subunit B (Rnaseh2b) of Mus musculus (Mouse).